The following is a 101-amino-acid chain: MAAISREEVAHLARLSRLAVTEEELDTLAGQLDVILQAVAQVGEVTAADIPPTSHSVPLTNVLRDDVVASCLTPEEALSGAPDAAEQRFRVPRILDEDVAS.

Belongs to the GatC family. In terms of assembly, heterotrimer of A, B and C subunits.

The enzyme catalyses L-glutamyl-tRNA(Gln) + L-glutamine + ATP + H2O = L-glutaminyl-tRNA(Gln) + L-glutamate + ADP + phosphate + H(+). It carries out the reaction L-aspartyl-tRNA(Asn) + L-glutamine + ATP + H2O = L-asparaginyl-tRNA(Asn) + L-glutamate + ADP + phosphate + 2 H(+). Its function is as follows. Allows the formation of correctly charged Asn-tRNA(Asn) or Gln-tRNA(Gln) through the transamidation of misacylated Asp-tRNA(Asn) or Glu-tRNA(Gln) in organisms which lack either or both of asparaginyl-tRNA or glutaminyl-tRNA synthetases. The reaction takes place in the presence of glutamine and ATP through an activated phospho-Asp-tRNA(Asn) or phospho-Glu-tRNA(Gln). The polypeptide is Aspartyl/glutamyl-tRNA(Asn/Gln) amidotransferase subunit C (Salinispora tropica (strain ATCC BAA-916 / DSM 44818 / JCM 13857 / NBRC 105044 / CNB-440)).